Reading from the N-terminus, the 556-residue chain is Sesquiterpene synthase 2 (556 aa).

Mg(2+) contacts are provided by aspartate 309, aspartate 313, aspartate 453, and glutamate 461. The short motif at 309 to 313 is the DDXXD motif element; it reads DDIYD.

The protein belongs to the terpene synthase family. Tpsa subfamily. Mg(2+) is required as a cofactor. It depends on Mn(2+) as a cofactor. Mostly expressed in roots and mature leaflets and, to a lower extent, in rachis and developing leaflets.

The enzyme catalyses (2E,6E)-farnesyl diphosphate = alpha-humulene + diphosphate. The catalysed reaction is (2E,6E)-farnesyl diphosphate = alpha-selinene + diphosphate. It carries out the reaction (2E,6E)-farnesyl diphosphate = delta-cadinene + diphosphate. It catalyses the reaction (2E,6E)-farnesyl diphosphate = (1S,2S,4R)-beta-elemene + diphosphate. The protein operates within secondary metabolite biosynthesis; terpenoid biosynthesis. Its function is as follows. Sesquiterpene synthase involved in the biosynthesis of volatile compounds known for their medicinal efficacy for treating enteritis, dysentery, itch and some cancers. Mediates the conversion of (2E,6E)-farnesyl diphosphate (FPP) into beta-elemene, alpha-humulene, delta-cadinene and alpha-selinene. This is Sesquiterpene synthase 2 from Toona sinensis (Chinese mahogany).